Here is a 29-residue protein sequence, read N- to C-terminus: GFISTVKNLATNVAGTVIDTIKCKVTGGC.

Residues cysteine 23 and cysteine 29 are joined by a disulfide bond.

Expressed by the skin glands.

It is found in the secreted. In terms of biological role, mast cell degranulating peptide. Causes histamine release from rat peritoneal mast cells in vitro. Has antibacterial activity against the Gram-negative bacterium E.coli K12 and Gram-positive bacterium M.luteus NCT C2665. This chain is Ranatuerin-2SEa, found in Lithobates sevosus (Dusky gopher frog).